A 585-amino-acid chain; its full sequence is Probable glucomannan 4-beta-mannosyltransferase 7 (585 aa).

Residues 87 to 107 traverse the membrane as a helical segment; sequence VIAPTLQVAVWVCMVMSVMLV. The active site involves Asp-188. Asp-247 and Asp-249 together coordinate substrate. Asp-341 is an active-site residue. The next 4 membrane-spanning stretches (helical) occupy residues 420 to 440, 443 to 463, 534 to 554, and 563 to 583; these read VVAPMVACVLYNIIVPLSVMI, LFIPIWGVAYIPMALLIITTI, LPEIGFSVFLIFCASYNLIFH, and LYLQGLAFLLLGFNFTGNFAC.

It belongs to the glycosyltransferase 2 family. Plant cellulose synthase-like A subfamily.

The protein localises to the golgi apparatus membrane. It carries out the reaction GDP-mannose + (glucomannan)n = GDP + (glucomannan)n+1.. Probable mannan synthase which consists of a 4-beta-mannosyltransferase activity on mannan using GDP-mannose. The beta-1,4-mannan product is the backbone for galactomannan synthesis by galactomannan galactosyltransferase. Galactomannan is a noncellulosic polysaccharides of plant cell wall. This Oryza sativa subsp. japonica (Rice) protein is Probable glucomannan 4-beta-mannosyltransferase 7.